We begin with the raw amino-acid sequence, 274 residues long: MRSNNNNPLTRDEILSRYFPQYRPAVAASQGLSGGSCIIAHDTHRIVLRRHHDPDAPPAHFLRHYRALSQLPASLAPRALFYTPGWMAVEYLHGVVNSALPDADELAALLYHLHQQPRFGWRIALSPLLAQYWSCCDPARRTPFWLRRLKQLQKNGEPRPLRLAPLHMDVHGDNIVLTSAGLRLIDWEYAGDGDIALELAAVWVEDERQHRQLADAYAARARIDARQLWRQIRLWHPWVIMLKAGWFEYRWRQTGEQQFIRLADETWRQLRMKG.

This sequence belongs to the thiamine kinase family.

The catalysed reaction is thiamine + ATP = thiamine phosphate + ADP + H(+). It functions in the pathway cofactor biosynthesis; thiamine diphosphate biosynthesis; thiamine phosphate from thiamine: step 1/1. In terms of biological role, catalyzes the ATP-dependent phosphorylation of thiamine to thiamine phosphate. Is involved in thiamine salvage. In Salmonella dublin (strain CT_02021853), this protein is Thiamine kinase.